Consider the following 327-residue polypeptide: Interleukin-12 subunit beta (327 aa).

The signal sequence occupies residues Met1–Ala22. The region spanning Ile23–Lys106 is the Ig-like C2-type domain. Residues Cys50 and Cys90 are joined by a disulfide bond. N-linked (GlcNAc...) asparagine glycans are attached at residues Asn134 and Asn152. The Fibronectin type-III domain occupies Pro237 to Pro327.

The protein belongs to the IL-12B family. Heterodimer with IL12A; disulfide-linked. The heterodimer is known as interleukin IL-12. Heterodimer with IL23A; disulfide-linked. The heterodimer is known as interleukin IL-23. Also secreted as a monomer. Interacts with NBR1; this interaction promotes IL-12 secretion.

It is found in the secreted. Cytokine that can act as a growth factor for activated T and NK cells, enhance the lytic activity of NK/lymphokine-activated killer cells, and stimulate the production of IFN-gamma by resting PBMC. Functionally, associates with IL23A to form the IL-23 interleukin, a heterodimeric cytokine which functions in innate and adaptive immunity. IL-23 may constitute with IL-17 an acute response to infection in peripheral tissues. IL-23 binds to a heterodimeric receptor complex composed of IL12RB1 and IL23R, activates the Jak-Stat signaling cascade, stimulates memory rather than naive T-cells and promotes production of pro-inflammatory cytokines. IL-23 induces autoimmune inflammation and thus may be responsible for autoimmune inflammatory diseases and may be important for tumorigenesis. In Marmota monax (Woodchuck), this protein is Interleukin-12 subunit beta (IL12B).